The following is a 127-amino-acid chain: uncharacterized protein (127 aa).

This is an uncharacterized protein from Saccharomyces cerevisiae (strain ATCC 204508 / S288c) (Baker's yeast).